The sequence spans 715 residues: ABC transporter F family member 3 (715 aa).

N-acetylthreonine is present on threonine 2. Residues 96–118 are disordered; the sequence is VRMNDGMDDGPVKKKKPEPVDGP. ABC transporter domains are found at residues 175–436 and 504–713; these read IHMD…KNQQ and ISFS…LLQS. ATP is bound by residues 207–214 and 537–544; these read GRNGTGKT and GPNGIGKS.

Belongs to the ABC transporter superfamily. ABCF family. EF3 (TC 3.A.1.121) subfamily.

The polypeptide is ABC transporter F family member 3 (ABCF3) (Arabidopsis thaliana (Mouse-ear cress)).